The chain runs to 316 residues: Galectin-8 (316 aa).

Galectin domains lie at tyrosine 18–arginine 151 and phenylalanine 186–tryptophan 316. The a carbohydrate site is built by arginine 68, asparagine 78, and glutamate 88. Tryptophan 248–asparagine 254 contributes to the a beta-D-galactoside binding site.

As to quaternary structure, homodimer. Interacts with CALCOCO2/NDP52. Interacts with PDPN; the interaction is glycosylation-dependent; may participate in connection of the lymphatic endothelium to the surrounding extracellular matrix. In terms of tissue distribution, expressed in liver, kidney, cardiac muscle, lung, and brain.

The protein resides in the cytoplasmic vesicle. Its subcellular location is the cytoplasm. It is found in the cytosol. In terms of biological role, beta-galactoside-binding lectin that acts as a sensor of membrane damage caused by infection and restricts the proliferation of infecting pathogens by targeting them for autophagy. Detects membrane rupture by binding beta-galactoside ligands located on the lumenal side of the endosome membrane; these ligands becoming exposed to the cytoplasm following rupture. Restricts infection by initiating autophagy via interaction with CALCOCO2/NDP52. Required to restrict infection of bacterial invasion such as S.typhimurium. Also required to restrict infection of Picornaviridae viruses. Has a marked preference for 3'-O-sialylated and 3'-O-sulfated glycans. The protein is Galectin-8 (Lgals8) of Rattus norvegicus (Rat).